An 800-amino-acid polypeptide reads, in one-letter code: uncharacterized protein (800 aa).

An N-terminal signal peptide occupies residues 1-21 (MNRFFISTLLLLAQHLAPAAA). A compositionally biased stretch (polar residues) spans 63–72 (SLSTGSPVEI). Disordered stretches follow at residues 63-470 (SLST…PLTT), 602-670 (TPIT…SSTS), and 710-776 (SSLS…TPSS). Low complexity-rich tracts occupy residues 73-314 (TSTS…SSTS), 321-368 (STSS…SSTS), 375-444 (STSS…TSTP), and 451-470 (TTST…PLTT). Residues 710-720 (SSLSSIPNNST) show a composition bias toward low complexity. The span at 721–734 (EVKTASTSSGTEIK) shows a compositional bias: polar residues. Residues 735 to 776 (TASTSSGSSSSSSYTPASSTSTTTSSVSSRQSSSSSSFTPSS) show a composition bias toward low complexity.

Its subcellular location is the secreted. It localises to the cell surface. This is an uncharacterized protein from Schizosaccharomyces pombe (strain 972 / ATCC 24843) (Fission yeast).